Here is a 78-residue protein sequence, read N- to C-terminus: Large ribosomal subunit protein bL28 (78 aa).

The interval 1–21 is disordered; it reads MSRVCQVTGKRPVSGNNRSHA.

Belongs to the bacterial ribosomal protein bL28 family.

The chain is Large ribosomal subunit protein bL28 from Yersinia enterocolitica serotype O:8 / biotype 1B (strain NCTC 13174 / 8081).